The sequence spans 157 residues: Cell cycle control protein 50C (157 aa).

Residues 1–34 (MEERAQHCLSRLLDNSALKQQELPIHRLYFTARR) lie on the Cytoplasmic side of the membrane. The chain crosses the membrane as a helical span at residues 35-55 (VLFVFFATGIFCLCMGIILIL). Over 56–157 (SARSTQEIEI…LFLNQVDFSV (102 aa)) the chain is Extracellular. An N-linked (GlcNAc...) asparagine glycan is attached at Asn-66.

This sequence belongs to the CDC50/LEM3 family.

Its subcellular location is the membrane. The chain is Cell cycle control protein 50C (TMEM30C) from Pan troglodytes (Chimpanzee).